Consider the following 123-residue polypeptide: Large ribosomal subunit protein bL20 (123 aa).

The protein belongs to the bacterial ribosomal protein bL20 family.

Functionally, binds directly to 23S ribosomal RNA and is necessary for the in vitro assembly process of the 50S ribosomal subunit. It is not involved in the protein synthesizing functions of that subunit. This is Large ribosomal subunit protein bL20 from Ehrlichia ruminantium (strain Gardel).